Here is a 372-residue protein sequence, read N- to C-terminus: DNA replication and repair protein RecF (372 aa).

An ATP-binding site is contributed by 30 to 37; that stretch reads GENGQGKT.

The protein belongs to the RecF family.

It is found in the cytoplasm. Its function is as follows. The RecF protein is involved in DNA metabolism; it is required for DNA replication and normal SOS inducibility. RecF binds preferentially to single-stranded, linear DNA. It also seems to bind ATP. This is DNA replication and repair protein RecF from Anaeromyxobacter dehalogenans (strain 2CP-1 / ATCC BAA-258).